Here is a 217-residue protein sequence, read N- to C-terminus: MVMTLYKLDASPPARAVMMVIEALKIPDVEYIDVNLLEGSHLSEEFTKMNPQHTVPLLKDDDFLVWDSHAIAGYLVSKYGADDSLYPTDPKKRAIVDQRLHFDSGILFPALRGSLEPVIFWGETAFRPECLEKVRKGYDFAEKFLTSTWMAGEEFTVADICCVASISTMNDIIVPIDENTYPKLSAWLERCSQLDVYKKKNAPGNDLCKDLVASKLS.

The 83-residue stretch at 1 to 83 (MVMTLYKLDA…YLVSKYGADD (83 aa)) folds into the GST N-terminal domain. Glutathione-binding positions include S11, 53-55 (HTV), and 67-69 (DSH). A GST C-terminal domain is found at 89-211 (DPKKRAIVDQ…APGNDLCKDL (123 aa)).

This sequence belongs to the GST superfamily. Theta family. As to quaternary structure, homodimer.

It carries out the reaction RX + glutathione = an S-substituted glutathione + a halide anion + H(+). Functionally, conjugation of reduced glutathione to a wide number of exogenous and endogenous hydrophobic electrophiles. This is Glutathione S-transferase 1 (GST1) from Manduca sexta (Tobacco hawkmoth).